A 214-amino-acid chain; its full sequence is ATP phosphoribosyltransferase (214 aa).

It belongs to the ATP phosphoribosyltransferase family. Short subfamily. In terms of assembly, heteromultimer composed of HisG and HisZ subunits.

The protein resides in the cytoplasm. The enzyme catalyses 1-(5-phospho-beta-D-ribosyl)-ATP + diphosphate = 5-phospho-alpha-D-ribose 1-diphosphate + ATP. Its pathway is amino-acid biosynthesis; L-histidine biosynthesis; L-histidine from 5-phospho-alpha-D-ribose 1-diphosphate: step 1/9. Functionally, catalyzes the condensation of ATP and 5-phosphoribose 1-diphosphate to form N'-(5'-phosphoribosyl)-ATP (PR-ATP). Has a crucial role in the pathway because the rate of histidine biosynthesis seems to be controlled primarily by regulation of HisG enzymatic activity. This Deinococcus deserti (strain DSM 17065 / CIP 109153 / LMG 22923 / VCD115) protein is ATP phosphoribosyltransferase.